A 284-amino-acid chain; its full sequence is UTP--glucose-1-phosphate uridylyltransferase (284 aa).

It belongs to the UDPGP type 2 family.

It catalyses the reaction alpha-D-glucose 1-phosphate + UTP + H(+) = UDP-alpha-D-glucose + diphosphate. This Komagataeibacter xylinus (Gluconacetobacter xylinus) protein is UTP--glucose-1-phosphate uridylyltransferase (celA).